A 466-amino-acid polypeptide reads, in one-letter code: 3-isopropylmalate dehydratase large subunit (466 aa).

[4Fe-4S] cluster is bound by residues C347, C407, and C410.

It belongs to the aconitase/IPM isomerase family. LeuC type 1 subfamily. Heterodimer of LeuC and LeuD. Requires [4Fe-4S] cluster as cofactor.

It carries out the reaction (2R,3S)-3-isopropylmalate = (2S)-2-isopropylmalate. It participates in amino-acid biosynthesis; L-leucine biosynthesis; L-leucine from 3-methyl-2-oxobutanoate: step 2/4. Catalyzes the isomerization between 2-isopropylmalate and 3-isopropylmalate, via the formation of 2-isopropylmaleate. The polypeptide is 3-isopropylmalate dehydratase large subunit (Vibrio vulnificus (strain YJ016)).